Consider the following 469-residue polypeptide: Probable glycine dehydrogenase (decarboxylating) subunit 1 (469 aa).

It belongs to the GcvP family. N-terminal subunit subfamily. The glycine cleavage system is composed of four proteins: P, T, L and H. In this organism, the P 'protein' is a heterodimer of two subunits.

It carries out the reaction N(6)-[(R)-lipoyl]-L-lysyl-[glycine-cleavage complex H protein] + glycine + H(+) = N(6)-[(R)-S(8)-aminomethyldihydrolipoyl]-L-lysyl-[glycine-cleavage complex H protein] + CO2. In terms of biological role, the glycine cleavage system catalyzes the degradation of glycine. The P protein binds the alpha-amino group of glycine through its pyridoxal phosphate cofactor; CO(2) is released and the remaining methylamine moiety is then transferred to the lipoamide cofactor of the H protein. The chain is Probable glycine dehydrogenase (decarboxylating) subunit 1 from Staphylothermus marinus (strain ATCC 43588 / DSM 3639 / JCM 9404 / F1).